Reading from the N-terminus, the 439-residue chain is D-erythronate kinase (439 aa).

ATP is bound by residues Ser-253, 366–369, and Gly-412; that span reads GGDV.

The protein belongs to the four-carbon acid sugar kinase family.

The enzyme catalyses D-erythronate + ATP = 4-phospho-D-erythronate + ADP + H(+). Its function is as follows. Catalyzes the ATP-dependent phosphorylation of D-erythronate to D-erythronate 4-phosphate. Can also phosphorylate D-threonate and 4-hydroxy-L-threonine, with lower efficiency. The protein is D-erythronate kinase of Heliobacterium modesticaldum (strain ATCC 51547 / Ice1).